Consider the following 477-residue polypeptide: Glycogen synthase (477 aa).

ADP-alpha-D-glucose is bound at residue lysine 15.

This sequence belongs to the glycosyltransferase 1 family. Bacterial/plant glycogen synthase subfamily.

It catalyses the reaction [(1-&gt;4)-alpha-D-glucosyl](n) + ADP-alpha-D-glucose = [(1-&gt;4)-alpha-D-glucosyl](n+1) + ADP + H(+). It functions in the pathway glycan biosynthesis; glycogen biosynthesis. Functionally, synthesizes alpha-1,4-glucan chains using ADP-glucose. In Salmonella arizonae (strain ATCC BAA-731 / CDC346-86 / RSK2980), this protein is Glycogen synthase.